We begin with the raw amino-acid sequence, 260 residues long: CD27 antigen (260 aa).

Positions methionine 1–serine 19 are cleaved as a signal peptide. Residues alanine 20–arginine 191 lie on the Extracellular side of the membrane. TNFR-Cys repeat units follow at residues serine 26 to aspartate 63, proline 64 to cysteine 104, and alanine 105 to glutamine 141. Disulfide bonds link cysteine 27–cysteine 39, cysteine 40–cysteine 53, cysteine 43–cysteine 62, cysteine 65–cysteine 81, cysteine 84–cysteine 96, cysteine 87–cysteine 104, cysteine 106–cysteine 120, and cysteine 112–cysteine 117. Residue asparagine 95 is glycosylated (N-linked (GlcNAc...) asparagine). Serine 127 carries an O-linked (GalNAc...) serine glycan. The chain crosses the membrane as a helical span at residues isoleucine 192–histidine 212. At glutamine 213–proline 260 the chain is on the cytoplasmic side. Position 219 is a phosphoserine (serine 219). The tract at residues serine 219–proline 260 is disordered. Positions glutamate 249 to proline 260 are enriched in basic and acidic residues.

Homodimer. Interacts with SIVA1; may play a role in apoptosis through association with SIVA1. Interacts with TRAF2. Interacts ith PTPN6. Phosphorylated. Post-translationally, N-glycosylated. In terms of processing, O-glycosylated with core 1 or possibly core 8 glycans. Found in most T-lymphocytes.

It localises to the cell membrane. Its function is as follows. Costimulatory immune-checkpoint receptor expressed at the surface of T-cells, NK-cells and B-cells which binds to and is activated by its ligand CD70/CD27L expressed by B-cells. The CD70-CD27 signaling pathway mediates antigen-specific T-cell activation and expansion which in turn provides immune surveillance of B-cells. Mechanistically, CD70 ligation activates the TRAF2-PTPN6 axis that subsequently inhibits LCK phosphorylation to promote phenotypic and transcriptional adaptations of T-cell memory. In addition, activation by CD70 on early progenitor cells provides a negative feedback signal to leukocyte differentiation during immune activation and thus modulates hematopoiesis. Negatively regulates the function of Th2 lymphocytes in the adipose tissue. The protein is CD27 antigen of Homo sapiens (Human).